The chain runs to 493 residues: Sulfoacetaldehyde dehydrogenase (acylating) (493 aa).

A compositionally biased stretch (basic residues) spans 1 to 10 (MSVQILHRRQ). The disordered stretch occupies residues 1-21 (MSVQILHRRQSNNSDLPLPTA). The active-site Nucleophile is cysteine 273.

Belongs to the aldehyde dehydrogenase family. In terms of assembly, homodimer.

The protein localises to the cytoplasm. The enzyme catalyses sulfoacetaldehyde + NADP(+) + CoA = sulfoacetyl-CoA + NADPH + H(+). In terms of biological role, involved in the degradation of sulfoacetate, a widespread natural product. Catalyzes the conversion of sulfoacetyl-CoA and NADPH to sulfoacetaldehyde, CoA and NADP(+). Specific for NADP(+) and sulfoacetaldehyde. This is Sulfoacetaldehyde dehydrogenase (acylating) from Cupriavidus necator (strain ATCC 17699 / DSM 428 / KCTC 22496 / NCIMB 10442 / H16 / Stanier 337) (Ralstonia eutropha).